Consider the following 3413-residue polypeptide: Protein pecanex (3413 aa).

2 helical membrane passes run 33–53 and 57–77; these read VVHLYLWLYLLCSPFVAYLYF and WLTWCLYCVITSLTILMVKLA. N-linked (GlcNAc...) asparagine glycosylation is present at Asn-164. Over residues 182 to 195 the composition is skewed to low complexity; that stretch reads GSQQDQQSLAGSAS. 2 disordered regions span residues 182–213 and 235–314; these read GSQQDQQSLAGSASVSKSIRSTGPGGNSSTSA and GSSA…ENKL. The segment covering 196-213 has biased composition (polar residues); sequence VSKSIRSTGPGGNSSTSA. An N-linked (GlcNAc...) asparagine glycan is attached at Asn-208. Over residues 302–312 the composition is skewed to low complexity; that stretch reads AAAAANSNAEN. An N-linked (GlcNAc...) asparagine glycan is attached at Asn-317. 4 disordered regions span residues 327-363, 379-403, 540-609, and 625-651; these read PSFLHSQPTNKARGQTNPRQHFITSAPSTGIGGGDAP, LVNPGRSSRLQRHRSSETHDERLKH, PGTG…GTGG, and PSVSNLSPHPNSVEAISGQQQMRNPLP. Residues 330-354 are compositionally biased toward polar residues; it reads LHSQPTNKARGQTNPRQHFITSAPS. Residues 392-402 show a composition bias toward basic and acidic residues; it reads RSSETHDERLK. Gly residues predominate over residues 541–559; that stretch reads GTGGSVTGGGGAAGGGGSA. Residues Asn-569 and Asn-581 are each glycosylated (N-linked (GlcNAc...) asparagine). Positions 569–582 are enriched in polar residues; the sequence is NATSYKHGSSQSNK. Gly residues predominate over residues 599-609; it reads GTSGGAGGTGG. Polar residues predominate over residues 625–634; it reads PSVSNLSPHP. N-linked (GlcNAc...) asparagine glycosylation is present at Asn-685. A compositionally biased stretch (basic and acidic residues) spans 720 to 730; the sequence is EKTAHEEHGDD. Disordered regions lie at residues 720-745, 816-873, 886-921, and 1002-1021; these read EKTAHEEHGDDCLGIGQGNADDDDEV, HHHS…NRQP, RQELSHQSGAVIPAPNPPVPIRSEADSGCPSSDCEQ, and KQTKQASRNSSSSNSTHSIS. Basic residues predominate over residues 816-826; it reads HHHSHLHHHKA. Positions 828-846 are enriched in low complexity; the sequence is SVEGAGPSGGSVAVGVSAG. A compositionally biased stretch (acidic residues) spans 847 to 856; sequence NDDEDEETED. Residue Asn-857 is glycosylated (N-linked (GlcNAc...) asparagine). A compositionally biased stretch (low complexity) spans 1008 to 1021; sequence SRNSSSSNSTHSIS. Residues Asn-1010, Asn-1015, Asn-1069, and Asn-1199 are each glycosylated (N-linked (GlcNAc...) asparagine). Transmembrane regions (helical) follow at residues 1315 to 1335 and 1343 to 1363; these read MHVLLASLLCTLVACLGAAIL and LCALLFCAVIAGAQYSLVKSV. Asn-1375 carries an N-linked (GlcNAc...) asparagine glycan. 4 helical membrane-spanning segments follow: residues 1376–1396, 1423–1443, 1474–1494, and 1504–1524; these read KTVAYSRAIYFCLAGGMLLLL, VVALLLQALYILLLCFPIIFS, LLGSFLCVVRSVLAVMLLYGP, and GTQYILFSIFCAMLVPLGYHL. Residue Asn-1572 is glycosylated (N-linked (GlcNAc...) asparagine). Disordered stretches follow at residues 1577–1675, 1722–1744, and 1760–1813; these read QLTT…TGEP, DKISSSSATNPGDMSTLTAGAGT, and AEAE…LPDP. Composition is skewed to basic and acidic residues over residues 1587-1598 and 1607-1620; these read RQTDVKTEHEQI and TVNEEHHEKDHGAD. The span at 1639-1666 shows a compositional bias: low complexity; the sequence is KTSSLGSSQQTLGKTISSSKRAITASSS. Positions 1725 to 1738 are enriched in polar residues; sequence SSSSATNPGDMSTL. A run of 5 repeats spans residues 1776–1777, 1778–1779, 1780–1781, 1782–1783, and 1784–1785. The 5 X 2 AA tandem repeats of G-T stretch occupies residues 1776–1785; it reads GTGTGTGTGT. Residues Asn-1791 and Asn-1804 are each glycosylated (N-linked (GlcNAc...) asparagine). Low complexity predominate over residues 1799–1808; that stretch reads GNTNSNGTGN. A run of 5 helical transmembrane segments spans residues 1830 to 1850, 1856 to 1876, 1914 to 1934, 1940 to 1960, and 1976 to 1996; these read LVVMTLLAVSVLGLHCSTVFT, LNVVLYSFIGVLGLLLHYIVP, LYIYLSVLERNVLFPLLAISS, QLIVAKFGLPWGTLIVAICAL, and IIIFTVLLFRIDFAMATETFI. The disordered stretch occupies residues 2344–2463; sequence SMGGAPPAQA…HSFANISRQT (120 aa). The span at 2346-2370 shows a compositional bias: low complexity; it reads GGAPPAQAPAAAGGASSAPATAGVA. N-linked (GlcNAc...) asparagine glycosylation is found at Asn-2380 and Asn-2387. The segment covering 2389-2411 has biased composition (low complexity); it reads SAHGGQAGPSSGQSKSQSQQQLR. Positions 2437–2447 are enriched in gly residues; that stretch reads GTGGVTGGGGD. Positions 2449–2463 are enriched in polar residues; the sequence is QLSSSHSFANISRQT. N-linked (GlcNAc...) asparagine glycans are attached at residues Asn-2458, Asn-2619, and Asn-2717. 2 disordered regions span residues 2908 to 2997 and 3198 to 3242; these read LNRE…SSGS and ESST…GDDG. A compositionally biased stretch (basic and acidic residues) spans 2940 to 2956; sequence RRPEVGSSRGRDHERRA. The N-linked (GlcNAc...) asparagine glycan is linked to Asn-3246. The segment at 3295-3413 is disordered; it reads AEESKEKGTA…NGESEAGTTV (119 aa). The span at 3310 to 3323 shows a compositional bias: acidic residues; the sequence is EGEEGVGEMEIEPE. Residues 3364–3377 show a composition bias toward low complexity; sequence TSSTSSAKSTSSPS. Residues 3380–3406 are compositionally biased toward acidic residues; that stretch reads QEEEDAVDPEETPELASEESPSDENGE.

It belongs to the pecanex family.

The protein resides in the membrane. Functionally, involved in neurogenesis. The chain is Protein pecanex (pcx) from Drosophila melanogaster (Fruit fly).